The sequence spans 394 residues: NADH dehydrogenase [ubiquinone] iron-sulfur protein 2 (394 aa).

The protein belongs to the complex I 49 kDa subunit family. In terms of assembly, complex I is composed of at least 49 different subunits. This is a component of the iron-sulfur (IP) fragment of the enzyme.

The protein localises to the mitochondrion. The enzyme catalyses a ubiquinone + NADH + 5 H(+)(in) = a ubiquinol + NAD(+) + 4 H(+)(out). In terms of biological role, core subunit of the mitochondrial membrane respiratory chain NADH dehydrogenase (Complex I) that is believed to belong to the minimal assembly required for catalysis. Complex I functions in the transfer of electrons from NADH to the respiratory chain. The immediate electron acceptor for the enzyme is believed to be ubiquinone. Component of the iron-sulfur (IP) fragment of the enzyme. This Arabidopsis thaliana (Mouse-ear cress) protein is NADH dehydrogenase [ubiquinone] iron-sulfur protein 2 (NAD7).